Here is a 212-residue protein sequence, read N- to C-terminus: Probable nicotinate-nucleotide adenylyltransferase (212 aa).

The protein belongs to the NadD family.

It carries out the reaction nicotinate beta-D-ribonucleotide + ATP + H(+) = deamido-NAD(+) + diphosphate. It functions in the pathway cofactor biosynthesis; NAD(+) biosynthesis; deamido-NAD(+) from nicotinate D-ribonucleotide: step 1/1. Catalyzes the reversible adenylation of nicotinate mononucleotide (NaMN) to nicotinic acid adenine dinucleotide (NaAD). The sequence is that of Probable nicotinate-nucleotide adenylyltransferase from Chromobacterium violaceum (strain ATCC 12472 / DSM 30191 / JCM 1249 / CCUG 213 / NBRC 12614 / NCIMB 9131 / NCTC 9757 / MK).